Here is a 363-residue protein sequence, read N- to C-terminus: NAD(P)H-quinone oxidoreductase subunit 1, chloroplastic (363 aa).

The next 6 helical transmembrane spans lie at 30–50, 98–118, 127–147, 248–268, 300–320, and 336–356; these read LVPI…IVWL, FSIG…VIPF, LSIG…GLLM, YSGI…LVSS, VFGT…FLFI, and LLNL…LLTT.

It belongs to the complex I subunit 1 family. In terms of assembly, NDH is composed of at least 16 different subunits, 5 of which are encoded in the nucleus.

The protein localises to the plastid. The protein resides in the chloroplast thylakoid membrane. It carries out the reaction a plastoquinone + NADH + (n+1) H(+)(in) = a plastoquinol + NAD(+) + n H(+)(out). The catalysed reaction is a plastoquinone + NADPH + (n+1) H(+)(in) = a plastoquinol + NADP(+) + n H(+)(out). Its function is as follows. NDH shuttles electrons from NAD(P)H:plastoquinone, via FMN and iron-sulfur (Fe-S) centers, to quinones in the photosynthetic chain and possibly in a chloroplast respiratory chain. The immediate electron acceptor for the enzyme in this species is believed to be plastoquinone. Couples the redox reaction to proton translocation, and thus conserves the redox energy in a proton gradient. The polypeptide is NAD(P)H-quinone oxidoreductase subunit 1, chloroplastic (Drimys granadensis).